Consider the following 369-residue polypeptide: Putative 2-aminoethylphosphonate import ATP-binding protein PhnT (369 aa).

An ABC transporter domain is found at 19-250; the sequence is IVLDSLRVAY…PPNRFAAEFL (232 aa). ATP is bound at residue 51 to 58; sequence GPSGSGKT.

Belongs to the ABC transporter superfamily. 2-aminoethylphosphonate importer (TC 3.A.1.11.5) family.

It is found in the cell inner membrane. Its function is as follows. Probably part of the PhnSTUV complex (TC 3.A.1.11.5) involved in 2-aminoethylphosphonate import. Probably responsible for energy coupling to the transport system. The chain is Putative 2-aminoethylphosphonate import ATP-binding protein PhnT (phnT) from Salmonella paratyphi A (strain ATCC 9150 / SARB42).